Reading from the N-terminus, the 584-residue chain is Lamin-B1 (584 aa).

The interval 1-22 (MAAAVAPLSPQPRGAAASAALS) is disordered. Residues 2 to 33 (AAAVAPLSPQPRGAAASAALSPTRISRLQEKE) form a head region. Position 22 is a phosphoserine (Ser22). The IF rod domain occupies 31-387 (EKEELRQLND…KLLESEEERL (357 aa)). Residues 34–70 (ELRQLNDRLAVYIDKVRSLETENSALQRRVSEREQVC) form a coil 1A region. The interval 81-218 (FETELADARK…NVYEEEIKET (138 aa)) is coil 1B. Residues 243 to 385 (QALKEIREQH…YRKLLESEEE (143 aa)) form a coil 2 region. The tail stretch occupies residues 386-584 (RLRLSPGPSS…RKPERSCVVM (199 aa)). Disordered regions lie at residues 388-431 (RLSP…SVSI) and 548-584 (TVNEGEEEEEEGEEEILEDVIHQQGSPRKPERSCVVM). A compositionally biased stretch (low complexity) spans 394–408 (SSRVTVSRASSSRSV). Residues 414–419 (KRKRID) carry the Nuclear localization signal motif. The LTD domain occupies 429 to 545 (VSISHSASAT…EEVAQRSTVF (117 aa)). The span at 551–565 (EGEEEEEEGEEEILE) shows a compositional bias: acidic residues. Over residues 575–584 (RKPERSCVVM) the composition is skewed to basic and acidic residues. Cys581 carries the post-translational modification Cysteine methyl ester. A lipid anchor (S-farnesyl cysteine) is attached at Cys581. A propeptide spans 582–584 (VVM) (removed in mature form).

Belongs to the intermediate filament family. In terms of assembly, homodimer. Lamin dimers then assemble into dimeric head-to-tail polymers. Ultimately, two head-to-tail polymers assemble laterally into a protofilament with a uniformly shaped rod of 3.5 nm in diameter. Post-translationally, phosphorylation plays a key role in lamin organization, subcellular localization and nuclear envelope disintegration. Phosphorylation by CDK1 at Ser-22 at the onset of mitosis drives lamin disassembly and nuclear envelope breakdown.

Its subcellular location is the nucleus lamina. The protein localises to the nucleus envelope. It is found in the nucleus. It localises to the nucleoplasm. The protein resides in the nucleus matrix. In terms of biological role, lamins are intermediate filament proteins that assemble into a filamentous meshwork, and which constitute the major components of the nuclear lamina, a fibrous layer on the nucleoplasmic side of the inner nuclear membrane. Lamins provide a framework for the nuclear envelope, bridging the nuclear envelope and chromatin. Plays an important role in nuclear assembly, chromatin organization, nuclear membrane and telomere dynamics. This is Lamin-B1 (LMNB1) from Gallus gallus (Chicken).